The sequence spans 245 residues: Ribonuclease 3 (245 aa).

An RNase III domain is found at 24 to 146; sequence YAVFLQKLGY…IIGAIYLESG (123 aa). A Mg(2+)-binding site is contributed by Glu-59. Residue Asp-63 is part of the active site. The Mg(2+) site is built by Asn-132 and Glu-135. Glu-135 is an active-site residue. The 71-residue stretch at 173–243 folds into the DRBM domain; the sequence is DSKTLLQEYL…ARQAYELAIV (71 aa).

The protein belongs to the ribonuclease III family. In terms of assembly, homodimer. Mg(2+) is required as a cofactor.

The protein localises to the cytoplasm. The catalysed reaction is Endonucleolytic cleavage to 5'-phosphomonoester.. In terms of biological role, digests double-stranded RNA. Involved in the processing of primary rRNA transcript to yield the immediate precursors to the large and small rRNAs (23S and 16S). Processes some mRNAs, and tRNAs when they are encoded in the rRNA operon. Processes pre-crRNA and tracrRNA of type II CRISPR loci if present in the organism. The protein is Ribonuclease 3 of Nitrosomonas europaea (strain ATCC 19718 / CIP 103999 / KCTC 2705 / NBRC 14298).